We begin with the raw amino-acid sequence, 339 residues long: UDP-N-acetylenolpyruvoylglucosamine reductase (339 aa).

Residues 18–189 (GIDVKARYFS…LRVRFALTRT (172 aa)) form the FAD-binding PCMH-type domain. Arg166 is a catalytic residue. Ser239 acts as the Proton donor in catalysis. Residue Glu335 is part of the active site.

It belongs to the MurB family. It depends on FAD as a cofactor.

The protein resides in the cytoplasm. The enzyme catalyses UDP-N-acetyl-alpha-D-muramate + NADP(+) = UDP-N-acetyl-3-O-(1-carboxyvinyl)-alpha-D-glucosamine + NADPH + H(+). It functions in the pathway cell wall biogenesis; peptidoglycan biosynthesis. Its function is as follows. Cell wall formation. The chain is UDP-N-acetylenolpyruvoylglucosamine reductase from Pseudomonas putida (strain ATCC 47054 / DSM 6125 / CFBP 8728 / NCIMB 11950 / KT2440).